The following is a 434-amino-acid chain: Serine hydroxymethyltransferase (434 aa).

Residues leucine 133 and 137 to 139 each bind (6S)-5,6,7,8-tetrahydrofolate; that span reads GHL. An N6-(pyridoxal phosphate)lysine modification is found at lysine 242.

Belongs to the SHMT family. In terms of assembly, homodimer. Pyridoxal 5'-phosphate serves as cofactor.

The protein resides in the cytoplasm. The enzyme catalyses (6R)-5,10-methylene-5,6,7,8-tetrahydrofolate + glycine + H2O = (6S)-5,6,7,8-tetrahydrofolate + L-serine. Its pathway is one-carbon metabolism; tetrahydrofolate interconversion. It participates in amino-acid biosynthesis; glycine biosynthesis; glycine from L-serine: step 1/1. Functionally, catalyzes the reversible interconversion of serine and glycine with tetrahydrofolate (THF) serving as the one-carbon carrier. This reaction serves as the major source of one-carbon groups required for the biosynthesis of purines, thymidylate, methionine, and other important biomolecules. Also exhibits THF-independent aldolase activity toward beta-hydroxyamino acids, producing glycine and aldehydes, via a retro-aldol mechanism. In Methylorubrum extorquens (strain CM4 / NCIMB 13688) (Methylobacterium extorquens), this protein is Serine hydroxymethyltransferase.